The chain runs to 285 residues: (3S)-malyl-CoA thioesterase (285 aa).

Residues Arg70 and Glu122 each contribute to the substrate site. Positions 122 and 148 each coordinate Mg(2+).

Belongs to the HpcH/HpaI aldolase family. Homodimer or homotrimer. Mg(2+) is required as a cofactor.

The catalysed reaction is (S)-malyl-CoA + H2O = (S)-malate + CoA + H(+). Functionally, catalyzes the hydrolysis of (3S)-malyl-CoA to (3S)-malate and free CoA. Inactive towards beta-methylmalyl-CoA and other CoA esters. The chain is (3S)-malyl-CoA thioesterase from Cereibacter sphaeroides (strain KD131 / KCTC 12085) (Rhodobacter sphaeroides).